A 369-amino-acid chain; its full sequence is 4-hydroxy-3-methylbut-2-en-1-yl diphosphate synthase (flavodoxin) (369 aa).

[4Fe-4S] cluster is bound by residues C270, C273, C305, and E312.

It belongs to the IspG family. Requires [4Fe-4S] cluster as cofactor.

It carries out the reaction (2E)-4-hydroxy-3-methylbut-2-enyl diphosphate + oxidized [flavodoxin] + H2O + 2 H(+) = 2-C-methyl-D-erythritol 2,4-cyclic diphosphate + reduced [flavodoxin]. It functions in the pathway isoprenoid biosynthesis; isopentenyl diphosphate biosynthesis via DXP pathway; isopentenyl diphosphate from 1-deoxy-D-xylulose 5-phosphate: step 5/6. Functionally, converts 2C-methyl-D-erythritol 2,4-cyclodiphosphate (ME-2,4cPP) into 1-hydroxy-2-methyl-2-(E)-butenyl 4-diphosphate. The chain is 4-hydroxy-3-methylbut-2-en-1-yl diphosphate synthase (flavodoxin) from Pseudomonas fluorescens (strain Pf0-1).